The primary structure comprises 504 residues: MSFSVDVLANIAIELQRGIGHQDRFQRLITTLRQVLECDASALLRYDSRQFIPLAIDGLAKDVLGRRFALEGHPRLEAIARAGDVVRFPADSELPDPYDGLIPGQESLKVHACVGLPLFAGQNLIGALTLDGMQPDQFDVFSDEELRLIAALAAGALSNALLIEQLESQNMLPGDATPFEAVKQTQMIGLSPGMTQLKKEIEIVAASDLNVLISGETGTGKELVAKAIHEASPRAVNPLVYLNCAALPESVAESELFGHVKGAFTGAISNRSGKFEMADNGTLFLDEIGELSLALQAKLLRVLQYGDIQRVGDDRCLRVDVRVLAATNRDLREEVLAGRFRADLFHRLSVFPLSVPPLRERGDDVILLAGYFCEQCRLRQGLSRVVLSAGARNLLQHYSFPGNVRELEHAIHRAVVLARATRSGDEVILEAQHFAFPEVTLPTPEVAAVPVVKQNLREATEAFQRETIRQALAQNHHNWAACARMLETDVANLHRLAKRLGLKD.

Position 57 is a 4-aspartylphosphate (D57). A Sigma-54 factor interaction domain is found at 187 to 416; that stretch reads MIGLSPGMTQ…LEHAIHRAVV (230 aa). Residues 215-222 and 278-287 each bind ATP; these read GETGTGKE and ADNGTLFLDE. The segment at residues 479–498 is a DNA-binding region (H-T-H motif); that stretch reads WAACARMLETDVANLHRLAK.

The protein operates within nitrogen metabolism; nitric oxide reduction. Functionally, required for the expression of anaerobic nitric oxide (NO) reductase, acts as a transcriptional activator for at least the norVW operon. Activation also requires sigma-54. The polypeptide is Anaerobic nitric oxide reductase transcription regulator NorR (Escherichia coli (strain K12 / MC4100 / BW2952)).